The chain runs to 73 residues: Large ribosomal subunit protein bL31 (73 aa).

The protein belongs to the bacterial ribosomal protein bL31 family. Type A subfamily. As to quaternary structure, part of the 50S ribosomal subunit.

Binds the 23S rRNA. The sequence is that of Large ribosomal subunit protein bL31 from Synechococcus sp. (strain JA-3-3Ab) (Cyanobacteria bacterium Yellowstone A-Prime).